The chain runs to 157 residues: MGIISFIFALAEDMLLAAIPAVGFAMVFNVPQRALRWCALLGAIGHGSRMVMMSAGFNIEWATFLAALLVGSIGIQWSRWYLAHPKIFTVAAVIPMFPGISAYTAMISAVKISHFGYSEEMMILLLSNFLKASSIVGALSIGLSIPGLWLYRKRPRV.

Helical transmembrane passes span 2-22 (GIIS…IPAV), 55-75 (AGFN…SIGI), 87-107 (IFTV…TAMI), and 129-149 (FLKA…PGLW).

This sequence belongs to the ThrE exporter (TC 2.A.79) family. The transporter is composed of YjjB and YjjP.

The protein localises to the cell inner membrane. Functionally, involved in succinate export with YjjP. Both proteins are required for export. The protein is Probable succinate transporter subunit YjjB of Klebsiella pneumoniae (strain 342).